Reading from the N-terminus, the 131-residue chain is Small ribosomal subunit protein uS11 (131 aa).

Belongs to the universal ribosomal protein uS11 family. In terms of assembly, part of the 30S ribosomal subunit.

Functionally, located on the platform of the 30S subunit. This chain is Small ribosomal subunit protein uS11, found in Haloquadratum walsbyi (strain DSM 16790 / HBSQ001).